We begin with the raw amino-acid sequence, 281 residues long: Transformer-2 protein homolog alpha (281 aa).

The disordered stretch occupies residues 1–116; sequence MSDVEENNFE…TGSRANPDPN (116 aa). N-acetylserine is present on Ser-2. Phosphoserine is present on residues Ser-2 and Ser-14. Thr-24 carries the phosphothreonine modification. The segment covering 51–82 has biased composition (basic residues); it reads RSRSKSRSRSRRHSHRRYTRSRSHSHRRRSRS. Phosphoserine is present on residues Ser-80, Ser-82, and Ser-84. Thr-86 carries the post-translational modification Phosphothreonine. The span at 90–108 shows a compositional bias: basic residues; that stretch reads RRRRSRSHSPMSNRRRHTG. A phosphoserine mark is found at Ser-94 and Ser-96. The 79-residue stretch at 117-195 folds into the RRM domain; sequence TCLGVFGLSL…RRIRVDYSIT (79 aa). Lys-196 participates in a covalent cross-link: Glycyl lysine isopeptide (Lys-Gly) (interchain with G-Cter in SUMO2). The tract at residues 196 to 223 is linker; it reads KRAHTPTPGIYMGRPTHSGGGGGGGGGG. Residues 199-281 form a disordered region; sequence HTPTPGIYMG…RSRSYSPRRY (83 aa). Phosphothreonine is present on residues Thr-200 and Thr-202. The span at 213–231 shows a compositional bias: gly residues; the sequence is SGGGGGGGGGGGGGGGGGG. An Omega-N-methylarginine modification is found at Arg-233. Residues 233-257 show a composition bias toward basic and acidic residues; that stretch reads RRRDSYYDRGYDRGYDRYEDYDYRR. Ser-237 carries the phosphoserine modification. Residues 267–281 are compositionally biased toward basic residues; sequence YRSRSRSRSYSPRRY.

This sequence belongs to the splicing factor SR family. In terms of assembly, binds to A3 enhancer proteins SRp75, SRp55, SRp40 and SRp30. Interacts with ILDR1 (via C-terminus) and ILDR2. In terms of processing, phosphorylated in the RS domains. As to expression, expressed in inner ear.

The protein localises to the nucleus. Its function is as follows. Sequence-specific RNA-binding protein which participates in the control of pre-mRNA splicing. In Mus musculus (Mouse), this protein is Transformer-2 protein homolog alpha.